Consider the following 188-residue polypeptide: Protein TIFY 9 (188 aa).

The segment at 20–41 is disordered; it reads DADDRHAKSGGSSASSSSSIRG. The segment covering 28–38 has biased composition (low complexity); sequence SGGSSASSSSS. Residues 80–114 enclose the Tify domain; sequence AAAAAAPMTLFYNGSVAVFDVSHDKAEAIMRMATE. A Jas motif is present at residues 135–160; that stretch reads PLTRTKSLQRFLSKRKERLTSLGPYQ. The disordered stretch occupies residues 156–188; the sequence is LGPYQVGGPAAVGATTSTTTKSFLAKEEEHTAS. Over residues 179–188 the composition is skewed to basic and acidic residues; sequence LAKEEEHTAS.

It belongs to the TIFY/JAZ family. In terms of assembly, interacts with COI1A and COI2 in a coronatine-dependent manner. Coronatine is an analog of jasmonoyl isoleucine (JA-Ile). In terms of processing, ubiquitinated. Targeted for degradation by the SCF(COI1) E3 ubiquitin ligase-proteasome pathway during jasmonate signaling.

Its function is as follows. Repressor of jasmonate responses. This is Protein TIFY 9 from Oryza sativa subsp. japonica (Rice).